The sequence spans 111 residues: Large ribosomal subunit protein uL22 (111 aa).

This sequence belongs to the universal ribosomal protein uL22 family. In terms of assembly, part of the 50S ribosomal subunit.

Its function is as follows. This protein binds specifically to 23S rRNA; its binding is stimulated by other ribosomal proteins, e.g. L4, L17, and L20. It is important during the early stages of 50S assembly. It makes multiple contacts with different domains of the 23S rRNA in the assembled 50S subunit and ribosome. Functionally, the globular domain of the protein is located near the polypeptide exit tunnel on the outside of the subunit, while an extended beta-hairpin is found that lines the wall of the exit tunnel in the center of the 70S ribosome. The chain is Large ribosomal subunit protein uL22 from Geotalea uraniireducens (strain Rf4) (Geobacter uraniireducens).